A 397-amino-acid polypeptide reads, in one-letter code: Succinate--CoA ligase [ADP-forming] subunit beta (397 aa).

The ATP-grasp domain occupies 9-254; it reads KALLKGYGAP…ETEEDAKEIE (246 aa). ATP-binding positions include Lys46, 53-55, Glu109, Ala112, and Glu117; that span reads GRG. The Mg(2+) site is built by Asn209 and Asp223. Substrate contacts are provided by residues Asn274 and 331–333; that span reads GIM.

It belongs to the succinate/malate CoA ligase beta subunit family. As to quaternary structure, heterotetramer of two alpha and two beta subunits. Mg(2+) is required as a cofactor.

The catalysed reaction is succinate + ATP + CoA = succinyl-CoA + ADP + phosphate. It carries out the reaction GTP + succinate + CoA = succinyl-CoA + GDP + phosphate. It functions in the pathway carbohydrate metabolism; tricarboxylic acid cycle; succinate from succinyl-CoA (ligase route): step 1/1. In terms of biological role, succinyl-CoA synthetase functions in the citric acid cycle (TCA), coupling the hydrolysis of succinyl-CoA to the synthesis of either ATP or GTP and thus represents the only step of substrate-level phosphorylation in the TCA. The beta subunit provides nucleotide specificity of the enzyme and binds the substrate succinate, while the binding sites for coenzyme A and phosphate are found in the alpha subunit. This chain is Succinate--CoA ligase [ADP-forming] subunit beta, found in Rhizobium leguminosarum bv. trifolii (strain WSM2304).